Consider the following 304-residue polypeptide: D-alanine--D-alanine ligase (304 aa).

An ATP-grasp domain is found at 101–298 (KKIFIKNKIL…FIKLIEWILK (198 aa)). 131-184 (EKNLKFPVVVKPINEGSSVHVYICDKTNILKNLKVLKSYNEILIEEFIPGREIQ) is a binding site for ATP. Asp253, Glu265, and Asn267 together coordinate Mg(2+).

This sequence belongs to the D-alanine--D-alanine ligase family. Mg(2+) is required as a cofactor. The cofactor is Mn(2+).

Its subcellular location is the cytoplasm. The catalysed reaction is 2 D-alanine + ATP = D-alanyl-D-alanine + ADP + phosphate + H(+). The protein operates within cell wall biogenesis; peptidoglycan biosynthesis. In terms of biological role, cell wall formation. The polypeptide is D-alanine--D-alanine ligase (Pelagibacter ubique (strain HTCC1062)).